Consider the following 105-residue polypeptide: Large ribosomal subunit protein uL24 (105 aa).

The protein belongs to the universal ribosomal protein uL24 family. Part of the 50S ribosomal subunit.

One of two assembly initiator proteins, it binds directly to the 5'-end of the 23S rRNA, where it nucleates assembly of the 50S subunit. Its function is as follows. One of the proteins that surrounds the polypeptide exit tunnel on the outside of the subunit. This chain is Large ribosomal subunit protein uL24, found in Halorhodospira halophila (strain DSM 244 / SL1) (Ectothiorhodospira halophila (strain DSM 244 / SL1)).